The chain runs to 156 residues: ATP synthase subunit b (156 aa).

The helical transmembrane segment at 11-31 threads the bilayer; the sequence is LIAFALFVWFCMKFVWPPIIN.

It belongs to the ATPase B chain family. F-type ATPases have 2 components, F(1) - the catalytic core - and F(0) - the membrane proton channel. F(1) has five subunits: alpha(3), beta(3), gamma(1), delta(1), epsilon(1). F(0) has three main subunits: a(1), b(2) and c(10-14). The alpha and beta chains form an alternating ring which encloses part of the gamma chain. F(1) is attached to F(0) by a central stalk formed by the gamma and epsilon chains, while a peripheral stalk is formed by the delta and b chains.

It localises to the cell inner membrane. Its function is as follows. F(1)F(0) ATP synthase produces ATP from ADP in the presence of a proton or sodium gradient. F-type ATPases consist of two structural domains, F(1) containing the extramembraneous catalytic core and F(0) containing the membrane proton channel, linked together by a central stalk and a peripheral stalk. During catalysis, ATP synthesis in the catalytic domain of F(1) is coupled via a rotary mechanism of the central stalk subunits to proton translocation. Functionally, component of the F(0) channel, it forms part of the peripheral stalk, linking F(1) to F(0). The protein is ATP synthase subunit b of Haemophilus influenzae (strain 86-028NP).